The chain runs to 461 residues: Phosphatidate cytidylyltransferase 1 (461 aa).

The interval 1-68 (MLELRHRGGC…PEVPPSSDRT (68 aa)) is disordered. At Arg7 the chain carries Omega-N-methylarginine. The span at 22 to 56 (REGEAAGGDHETESTSDKETDIDDRYGDLDARGDS) shows a compositional bias: basic and acidic residues. 2 positions are modified to phosphoserine: Ser35 and Ser37. The next 6 membrane-spanning stretches (helical) occupy residues 96 to 116 (MISL…LLVL), 149 to 169 (FLLC…FATF), 183 to 203 (HRFI…LSLV), 230 to 250 (LVIQ…SSVI), 279 to 299 (GFIG…YVLS), and 357 to 377 (IALS…ASGF).

This sequence belongs to the CDS family. In terms of assembly, homodimer. Interacts with FOS; this interaction may enhance catalytic activity. Mg(2+) is required as a cofactor. In terms of tissue distribution, expressed in adult brain, eye, smooth muscle and testis. Highly expressed in the inner segment of the photoreceptor layer of adult retina.

It localises to the endoplasmic reticulum membrane. It carries out the reaction a 1,2-diacyl-sn-glycero-3-phosphate + CTP + H(+) = a CDP-1,2-diacyl-sn-glycerol + diphosphate. The catalysed reaction is 1-octadecanoyl-2-(5Z,8Z,11Z,14Z-eicosatetraenoyl)-sn-glycero-3-phosphate + CTP + H(+) = 1-octadecanoyl-2-(5Z,8Z,11Z,14Z-eicosatetraenoyl)-sn-glycero-3-cytidine-5'-diphosphate + diphosphate. The enzyme catalyses 1-octadecanoyl-2-(9Z,12Z-octadecadienoyl)-sn-glycero-3-phosphate + CTP + H(+) = 1-octadecanoyl-2-(9Z,12Z-octadecadienoyl)-sn-glycero-3-cytidine-5'-diphosphate + diphosphate. It catalyses the reaction 1-hexadecanoyl-2-(5Z,8Z,11Z,14Z-eicosatetraenoyl)-sn-glycero-3-phosphate + CTP + H(+) = 1-hexadecanoyl-2-(5Z,8Z,11Z,14Z-eicosatetraenoyl)-sn-glycero-3-cytidine-5'-diphosphate + diphosphate. It carries out the reaction 1,2-di-(5Z,8Z,11Z,14Z)-eicosatetraenoyl-sn-glycero-3-phosphate + CTP + H(+) = 1,2-di-(5Z,8Z,11Z,14Z-eicosatetraenoyl)-sn-glycero-3-cytidine-5'-diphosphate + diphosphate. The catalysed reaction is 1-octadecanoyl-2-(9Z-octadecenoyl)-sn-glycero-3-phosphate + CTP + H(+) = 1-octadecanoyl-2-(9Z-octadecenoyl)-sn-glycero-3-cytidine-5'-diphosphate + diphosphate. The enzyme catalyses 1-octadecanoyl-2-(4Z,7Z,10Z,13Z,16Z,19Z-docosahexaenoyl)-sn-glycero-3-phosphate + CTP + H(+) = 1-octadecanoyl-2-(4Z,7Z,10Z,13Z,16Z,19Z-docosahexaenoyl)-sn-glycero-3-cytidine-5'-diphosphate + diphosphate. It catalyses the reaction 1,2-di-(9Z,12Z-octadecadienoyl)-sn-glycero-3-phosphate + CTP + H(+) = 1,2-di-(9Z,12Z-octadecadienoyl)-sn-glycero-3-cytidine-5'-diphosphate + diphosphate. It carries out the reaction 1,2-di-(9Z-octadecenoyl)-sn-glycero-3-phosphate + CTP + H(+) = 1,2-di-(9Z-octadecenoyl)-sn-glycero-3-cytidine-5'-diphosphate + diphosphate. The protein operates within phospholipid metabolism; CDP-diacylglycerol biosynthesis; CDP-diacylglycerol from sn-glycerol 3-phosphate: step 3/3. Its function is as follows. Catalyzes the conversion of phosphatidic acid (PA) to CDP-diacylglycerol (CDP-DAG), an essential intermediate in the synthesis of phosphatidylglycerol, cardiolipin and phosphatidylinositol. Exhibits almost no acyl chain preference for PA, showing no discrimination for the sn-1/sn-2 acyl chain composition of PAs. Plays an important role in regulating the growth of lipid droplets which are storage organelles at the center of lipid and energy homeostasis. Positively regulates the differentiation and development of adipocytes. This Mus musculus (Mouse) protein is Phosphatidate cytidylyltransferase 1.